We begin with the raw amino-acid sequence, 271 residues long: Shikimate dehydrogenase-like protein HI_0607 (271 aa).

Lys-67 acts as the Proton donor/acceptor in catalysis. Asp-103 provides a ligand contact to substrate. Residues 126–130, Lys-154, and Ser-184 each bind NADP(+); that span reads GSGGM.

The protein belongs to the shikimate dehydrogenase-like family. In terms of assembly, homodimer.

It catalyses the reaction shikimate + NADP(+) = 3-dehydroshikimate + NADPH + H(+). In vitro, is able to catalyze the NADP(+)-dependent oxidation of shikimate to 3-dehydroshikimate. However, has much lower activity than classical shikimate dehydrogenases AroE, indicating that shikimate may not be the biological substrate. Cannot utilize NAD(+) instead of NADP(+). Is not able to catalyze the oxidation of quinate. The chain is Shikimate dehydrogenase-like protein HI_0607 from Haemophilus influenzae (strain ATCC 51907 / DSM 11121 / KW20 / Rd).